The chain runs to 897 residues: MERAGATSRGGQAPGFLLRLHTEGRAEAARVQEQDLRQWGLTGIHLRSYQLEGVNWLAQRFHCQNGCILGDEMGLGKTCQTIALFIYLAGRLNDEGPFLILCPLSVLSNWKEEMQRFAPGLSCVTYAGDKEERACLQQDLKQESRFHVLLTTYEICLKDASFLKSFPWSVLVVDEAHRLKNQSSLLHKTLSEFSVVFSLLLTGTPIQNSLQELYSLLSFVEPDLFSKEEVGDFIQRYQDIEKESESASELHKLLQPFLLRRVKAEVATELPKKTEVVIYHGMSALQKKYYKAILMKDLDAFENETAKKVKLQNILSQLRKCVDHPYLFDGVEPEPFEVGDHLTEASGKLHLLDKLLAFLYSGGHRVLLFSQMTQMLDILQDYMDYRGYSYERVDGSVRGEERHLAIKNFGQQPIFVFLLSTRAGGVGMNLTAADTVIFVDSDFNPQNDLQAAARAHRIGQNKSVKVIRLIGRDTVEEIVYRKAASKLQLTNMIIEGGHFTLGAQKPAADADLQLSEILKFGLDKLLASEGSTMDEIDLESILGETKDGQWVSDALPAAEGGSRDQEEGKNHMYLFEGKDYSKEPSKEDRKSFEQLVNLQKTLLEKASQEGRSLRNKGSVLIPGLVEGSTKRKRVLSPEELEDRQKKRQEAAAKRRRLIEEKKRQKEEAEHKKKMAWWESNNYQSFCLPSEESEPEDLENGEESSAELDYQDPDATSLKYVSGDVTHPQAGAEDALIVHCVDDSGHWGRGGLFTALEKRSAEPRKIYELAGKMKDLSLGGVLLFPVDDKESRNKGQDLLALIVAQHRDRSNVLSGIKMAALEEGLKKIFLAAKKKKASVHLPRIGHATKGFNWYGTERLIRKHLAARGIPTYIYYFPRSKSAVLHSQSSSSSSRQLVP.

Arg9 is subject to Omega-N-methylarginine. A Helicase ATP-binding domain is found at 58-223; it reads AQRFHCQNGC…YSLLSFVEPD (166 aa). Position 71 to 78 (71 to 78) interacts with ATP; it reads DEMGLGKT. The short motif at 174 to 177 is the DEAH box element; the sequence is DEAH. In terms of domain architecture, Helicase C-terminal spans 351 to 513; the sequence is LLDKLLAFLY…QKPAADADLQ (163 aa). A phosphoserine mark is found at Ser540, Ser607, Ser618, Ser628, and Ser636. The interval 601-635 is regulatory linker segment (RLS); sequence TLLEKASQEGRSLRNKGSVLIPGLVEGSTKRKRVL. The segment at 615–673 is required for ATPase activity; the sequence is NKGSVLIPGLVEGSTKRKRVLSPEELEDRQKKRQEAAAKRRRLIEEKKRQKEEAEHKKK. 2 disordered regions span residues 628–654 and 687–711; these read STKRKRVLSPEELEDRQKKRQEAAAKR and LPSEESEPEDLENGEESSAELDYQD. Residues 638 to 675 adopt a coiled-coil conformation; the sequence is EELEDRQKKRQEAAAKRRRLIEEKKRQKEEAEHKKKMA. Basic and acidic residues predominate over residues 642-654; sequence DRQKKRQEAAAKR. Residues 690-711 are compositionally biased toward acidic residues; that stretch reads EESEPEDLENGEESSAELDYQD. Positions 704 to 897 constitute a Macro domain; it reads SAELDYQDPD…SSSSSRQLVP (194 aa). The residue at position 891 (Ser891) is a Phosphoserine.

Belongs to the SNF2/RAD54 helicase family. In terms of assembly, interacts with nucleosomes; interacts with the acidic patch of histones. Interacts (via macro domain) with PARP1; interacts only when PARP1 is poly-ADP-ribosylated (PARylated). Interacts with CIAO1. As to expression, frequently overexpressed in hepatomacellular carcinomas.

The protein localises to the nucleus. It localises to the chromosome. It carries out the reaction ATP + H2O = ADP + phosphate + H(+). With respect to regulation, adopts an inactive conformation in absence of DNA damage. Binding to poly-ADP-ribosylated histones activates the ATP-dependent chromatin remodeler activity. In terms of biological role, ATP-dependent chromatin remodeler that mediates chromatin-remodeling following DNA damage. Recruited to DNA damage sites through interaction with poly-ADP-ribose: specifically recognizes and binds histones that are poly-ADP-ribosylated on serine residues in response to DNA damage. Poly-ADP-ribose-binding activates the ATP-dependent chromatin remodeler activity, thereby regulating chromatin during DNA repair. Catalyzes nucleosome sliding away from DNA breaks in an ATP-dependent manner. Chromatin remodeling activity promotes PARP2 removal from chromatin. In Homo sapiens (Human), this protein is Chromodomain-helicase-DNA-binding protein 1-like.